Here is a 958-residue protein sequence, read N- to C-terminus: Dermatan-sulfate epimerase (958 aa).

The signal sequence occupies residues M1 to A22. Residues C23–R902 lie on the Lumenal side of the membrane. Residue N183 is glycosylated (N-linked (GlcNAc...) asparagine). Catalysis depends on H205, which acts as the Proton donor. Y261 is an active-site residue. 2 N-linked (GlcNAc...) asparagine glycosylation sites follow: N336 and N411. Residues H452 and E470 each contribute to the Mn(2+) site. Y473 is an active-site residue. N481 lines the Mn(2+) pocket. N-linked (GlcNAc...) asparagine glycosylation is found at N642 and N648. A helical transmembrane segment spans residues L903–F923. Topologically, residues Q924–R933 are cytoplasmic. A helical transmembrane segment spans residues C934–S954. The Lumenal segment spans residues Q955–C958.

This sequence belongs to the dermatan-sulfate isomerase family. The cofactor is Mn(2+). Post-translationally, N-glycosylated. Glycosylation is important for enzymatic activity.

It localises to the endoplasmic reticulum membrane. The protein localises to the golgi apparatus membrane. The protein resides in the cytoplasmic vesicle membrane. It is found in the microsome membrane. The enzyme catalyses chondroitin 4'-sulfate = dermatan 4'-sulfate. It functions in the pathway glycan metabolism; chondroitin sulfate biosynthesis. It participates in glycan metabolism; heparan sulfate biosynthesis. Its function is as follows. Converts D-glucuronic acid to L-iduronic acid (IdoUA) residues. Plays an important role in the biosynthesis of the glycosaminoglycan/mucopolysaccharide dermatan sulfate. This is Dermatan-sulfate epimerase (DSE) from Bos taurus (Bovine).